The following is an 86-amino-acid chain: MAQKKGGGSTRNGRDSESKRLGVKVFGGQAINAGGIIIRQRGTRVHAGDNVGVGKDHTLFALVDGHVQFAVKGPAKKQHVSVVPAA.

Over residues methionine 1 to threonine 10 the composition is skewed to gly residues. Residues methionine 1–leucine 21 are disordered.

This sequence belongs to the bacterial ribosomal protein bL27 family.

This is Large ribosomal subunit protein bL27 from Cupriavidus pinatubonensis (strain JMP 134 / LMG 1197) (Cupriavidus necator (strain JMP 134)).